The sequence spans 238 residues: Large ribosomal subunit protein uL1 (238 aa).

It belongs to the universal ribosomal protein uL1 family. Part of the 50S ribosomal subunit.

In terms of biological role, binds directly to 23S rRNA. The L1 stalk is quite mobile in the ribosome, and is involved in E site tRNA release. Functionally, protein L1 is also a translational repressor protein, it controls the translation of the L11 operon by binding to its mRNA. The protein is Large ribosomal subunit protein uL1 of Beutenbergia cavernae (strain ATCC BAA-8 / DSM 12333 / CCUG 43141 / JCM 11478 / NBRC 16432 / NCIMB 13614 / HKI 0122).